A 457-amino-acid chain; its full sequence is NAC domain-containing protein 69 (457 aa).

The NAC domain maps to 4–153 (DLVGYRFYPT…NYVICQVMYK (150 aa)). A DNA-binding region spans residues 107–159 (IGIKKTLVYYEGRVPKGVWTPWVMHEYHITCLPQDQRNYVICQVMYKGEDGDV). Disordered regions lie at residues 158-180 (DVPS…SNTV) and 302-332 (DSNS…SNRQ). A compositionally biased stretch (polar residues) spans 162-180 (GGNNSSEPSQSLVSDSNTV). A compositionally biased stretch (low complexity) spans 302–311 (DSNSDAESIS). Residues 312–332 (ATSYQGTSSPGDDSVGSSNRQ) show a composition bias toward polar residues. The chain crosses the membrane as a helical span at residues 421–441 (IYLMRMIIGFILLLALISNII).

It is found in the membrane. The protein localises to the nucleus. Functionally, transcription activator activated by proteolytic cleavage through regulated intramembrane proteolysis (RIP). Involved in salt stress response during seed germination and seedling growth. Binds the auxin-responsive IAA30 gene promoter and may serve as a molecular link that interconnects a developmental feedback loop of auxin signaling with a salt signal transduction pathway during seed germination. The sequence is that of NAC domain-containing protein 69 (NAC69) from Arabidopsis thaliana (Mouse-ear cress).